The following is a 299-amino-acid chain: Bifunctional protein FolD (299 aa).

NADP(+) contacts are provided by residues 166 to 168 (GRS), serine 191, and isoleucine 232.

Belongs to the tetrahydrofolate dehydrogenase/cyclohydrolase family. In terms of assembly, homodimer.

It carries out the reaction (6R)-5,10-methylene-5,6,7,8-tetrahydrofolate + NADP(+) = (6R)-5,10-methenyltetrahydrofolate + NADPH. It catalyses the reaction (6R)-5,10-methenyltetrahydrofolate + H2O = (6R)-10-formyltetrahydrofolate + H(+). The protein operates within one-carbon metabolism; tetrahydrofolate interconversion. Catalyzes the oxidation of 5,10-methylenetetrahydrofolate to 5,10-methenyltetrahydrofolate and then the hydrolysis of 5,10-methenyltetrahydrofolate to 10-formyltetrahydrofolate. This chain is Bifunctional protein FolD, found in Anaplasma marginale (strain St. Maries).